A 369-amino-acid chain; its full sequence is Anhydro-N-acetylmuramic acid kinase (369 aa).

Gly-12 to Asp-19 is a binding site for ATP.

It belongs to the anhydro-N-acetylmuramic acid kinase family.

It catalyses the reaction 1,6-anhydro-N-acetyl-beta-muramate + ATP + H2O = N-acetyl-D-muramate 6-phosphate + ADP + H(+). Its pathway is amino-sugar metabolism; 1,6-anhydro-N-acetylmuramate degradation. It functions in the pathway cell wall biogenesis; peptidoglycan recycling. In terms of biological role, catalyzes the specific phosphorylation of 1,6-anhydro-N-acetylmuramic acid (anhMurNAc) with the simultaneous cleavage of the 1,6-anhydro ring, generating MurNAc-6-P. Is required for the utilization of anhMurNAc either imported from the medium or derived from its own cell wall murein, and thus plays a role in cell wall recycling. This chain is Anhydro-N-acetylmuramic acid kinase, found in Escherichia coli O6:K15:H31 (strain 536 / UPEC).